The sequence spans 1584 residues: Pentafunctional AROM polypeptide (1584 aa).

The segment at 1–384 (MSQDTDVVSV…YEKHATVVSD (384 aa)) is 3-dehydroquinate synthase. Residues 46–48 (DTN), 83–86 (ETSK), 114–116 (GGV), and D119 each bind NAD(+). R130 provides a ligand contact to 7-phospho-2-dehydro-3-deoxy-D-arabino-heptonate. Residue 139 to 140 (TT) participates in NAD(+) binding. Residues D146 and K152 each contribute to the 7-phospho-2-dehydro-3-deoxy-D-arabino-heptonate site. K161 is a binding site for NAD(+). N162 lines the 7-phospho-2-dehydro-3-deoxy-D-arabino-heptonate pocket. Residues 179–182 (FLET) and N190 contribute to the NAD(+) site. E194 is a binding site for Zn(2+). 7-phospho-2-dehydro-3-deoxy-D-arabino-heptonate is bound by residues 194–197 (EVIK) and K250. The Proton acceptor; for 3-dehydroquinate synthase activity role is filled by E260. 7-phospho-2-dehydro-3-deoxy-D-arabino-heptonate-binding positions include 264-268 (RNLLN) and H271. Position 271 (H271) interacts with Zn(2+). H275 (proton acceptor; for 3-dehydroquinate synthase activity) is an active-site residue. The 7-phospho-2-dehydro-3-deoxy-D-arabino-heptonate site is built by H287 and K356. H287 lines the Zn(2+) pocket. The segment at 397-843 (VSPFDNSVSD…WDVLRNSFKI (447 aa)) is EPSP synthase. C825 (for EPSP synthase activity) is an active-site residue. Positions 863–1058 (RASVILIGMR…IQKPHSFFLS (196 aa)) are shikimate kinase. ATP is bound at residue 870 to 877 (GMRGAGKT). The tract at residues 1059 to 1280 (LTFPNINDAI…AAPGQLSVRQ (222 aa)) is 3-dehydroquinase. Residue H1182 is the Proton acceptor; for 3-dehydroquinate dehydratase activity of the active site. The active-site Schiff-base intermediate with substrate; for 3-dehydroquinate dehydratase activity is K1211. A shikimate dehydrogenase region spans residues 1293–1584 (PKKFYLFGTP…YMVLCAKEHN (292 aa)).

It in the N-terminal section; belongs to the sugar phosphate cyclases superfamily. Dehydroquinate synthase family. This sequence in the 2nd section; belongs to the EPSP synthase family. The protein in the 3rd section; belongs to the shikimate kinase family. In the 4th section; belongs to the type-I 3-dehydroquinase family. It in the C-terminal section; belongs to the shikimate dehydrogenase family. As to quaternary structure, homodimer. The cofactor is Zn(2+).

The protein resides in the cytoplasm. The enzyme catalyses 7-phospho-2-dehydro-3-deoxy-D-arabino-heptonate = 3-dehydroquinate + phosphate. It catalyses the reaction 3-dehydroquinate = 3-dehydroshikimate + H2O. The catalysed reaction is shikimate + NADP(+) = 3-dehydroshikimate + NADPH + H(+). It carries out the reaction shikimate + ATP = 3-phosphoshikimate + ADP + H(+). The enzyme catalyses 3-phosphoshikimate + phosphoenolpyruvate = 5-O-(1-carboxyvinyl)-3-phosphoshikimate + phosphate. It participates in metabolic intermediate biosynthesis; chorismate biosynthesis; chorismate from D-erythrose 4-phosphate and phosphoenolpyruvate: step 2/7. The protein operates within metabolic intermediate biosynthesis; chorismate biosynthesis; chorismate from D-erythrose 4-phosphate and phosphoenolpyruvate: step 3/7. It functions in the pathway metabolic intermediate biosynthesis; chorismate biosynthesis; chorismate from D-erythrose 4-phosphate and phosphoenolpyruvate: step 4/7. Its pathway is metabolic intermediate biosynthesis; chorismate biosynthesis; chorismate from D-erythrose 4-phosphate and phosphoenolpyruvate: step 5/7. It participates in metabolic intermediate biosynthesis; chorismate biosynthesis; chorismate from D-erythrose 4-phosphate and phosphoenolpyruvate: step 6/7. Its function is as follows. The AROM polypeptide catalyzes 5 consecutive enzymatic reactions in prechorismate polyaromatic amino acid biosynthesis. In Schizosaccharomyces japonicus (strain yFS275 / FY16936) (Fission yeast), this protein is Pentafunctional AROM polypeptide.